The following is a 105-amino-acid chain: Large ribosomal subunit protein uL24 (105 aa).

Belongs to the universal ribosomal protein uL24 family. As to quaternary structure, part of the 50S ribosomal subunit.

In terms of biological role, one of two assembly initiator proteins, it binds directly to the 5'-end of the 23S rRNA, where it nucleates assembly of the 50S subunit. Its function is as follows. One of the proteins that surrounds the polypeptide exit tunnel on the outside of the subunit. This is Large ribosomal subunit protein uL24 from Wolbachia sp. subsp. Brugia malayi (strain TRS).